Consider the following 100-residue polypeptide: Large ribosomal subunit protein uL23 (100 aa).

This sequence belongs to the universal ribosomal protein uL23 family. As to quaternary structure, part of the 50S ribosomal subunit. Contacts protein L29, and trigger factor when it is bound to the ribosome.

One of the early assembly proteins it binds 23S rRNA. One of the proteins that surrounds the polypeptide exit tunnel on the outside of the ribosome. Forms the main docking site for trigger factor binding to the ribosome. This is Large ribosomal subunit protein uL23 from Mycolicibacterium gilvum (strain PYR-GCK) (Mycobacterium gilvum (strain PYR-GCK)).